A 328-amino-acid chain; its full sequence is GTP 3',8-cyclase (328 aa).

The Radical SAM core domain occupies methionine 1–alanine 229. Residue arginine 8 coordinates GTP. Residues cysteine 15 and cysteine 19 each coordinate [4Fe-4S] cluster. Residue tyrosine 21 participates in S-adenosyl-L-methionine binding. Cysteine 22 serves as a coordination point for [4Fe-4S] cluster. Arginine 60 is a GTP binding site. Glycine 64 lines the S-adenosyl-L-methionine pocket. A GTP-binding site is contributed by threonine 91. Serine 115 serves as a coordination point for S-adenosyl-L-methionine. A GTP-binding site is contributed by lysine 155. An S-adenosyl-L-methionine-binding site is contributed by methionine 189. 2 residues coordinate [4Fe-4S] cluster: cysteine 252 and cysteine 255. Position 257–259 (arginine 257–arginine 259) interacts with GTP. Cysteine 269 provides a ligand contact to [4Fe-4S] cluster.

It belongs to the radical SAM superfamily. MoaA family. As to quaternary structure, monomer and homodimer. [4Fe-4S] cluster serves as cofactor.

It carries out the reaction GTP + AH2 + S-adenosyl-L-methionine = (8S)-3',8-cyclo-7,8-dihydroguanosine 5'-triphosphate + 5'-deoxyadenosine + L-methionine + A + H(+). It functions in the pathway cofactor biosynthesis; molybdopterin biosynthesis. Catalyzes the cyclization of GTP to (8S)-3',8-cyclo-7,8-dihydroguanosine 5'-triphosphate. This Nostoc sp. (strain PCC 7120 / SAG 25.82 / UTEX 2576) protein is GTP 3',8-cyclase.